We begin with the raw amino-acid sequence, 160 residues long: Cytochrome c-type biogenesis protein CcmE (160 aa).

The Cytoplasmic segment spans residues 1-8 (MSAPRKTR). The helical; Signal-anchor for type II membrane protein transmembrane segment at 9–29 (LYAILAVVCGAVLTIALMLYA) threads the bilayer. The Periplasmic portion of the chain corresponds to 30-160 (LSSNIDLFYT…PAAGPEGKRL (131 aa)). 2 residues coordinate heme: His-130 and Tyr-134.

It belongs to the CcmE/CycJ family.

It is found in the cell inner membrane. Its function is as follows. Heme chaperone required for the biogenesis of c-type cytochromes. Transiently binds heme delivered by CcmC and transfers the heme to apo-cytochromes in a process facilitated by CcmF and CcmH. The sequence is that of Cytochrome c-type biogenesis protein CcmE from Pectobacterium atrosepticum (strain SCRI 1043 / ATCC BAA-672) (Erwinia carotovora subsp. atroseptica).